Here is a 329-residue protein sequence, read N- to C-terminus: Ankyrin repeat and SOCS box protein 5 (329 aa).

6 ANK repeats span residues 69–98 (ADRS…NVNA), 102–131 (DHVT…NANA), 135–164 (DGVT…KAQL), 167–196 (CFPS…DVDQ), 200–229 (HLGT…DVHK), and 232–261 (YWDT…DINA). In terms of domain architecture, SOCS box spans 278–329 (AVERILLQHEATPSSLCQLCRLCIRNYIGRQRFHLIPQLQLPTLLQNFLQYR).

Belongs to the ankyrin SOCS box (ASB) family.

The protein operates within protein modification; protein ubiquitination. Functionally, may be a substrate-recognition component of a SCF-like ECS (Elongin-Cullin-SOCS-box protein) E3 ubiquitin-protein ligase complex which mediates the ubiquitination and subsequent proteasomal degradation of target proteins. May play a role in the initiation of arteriogenesis. This chain is Ankyrin repeat and SOCS box protein 5 (Asb5), found in Mus musculus (Mouse).